Here is a 257-residue protein sequence, read N- to C-terminus: Trans-aconitate 2-methyltransferase (257 aa).

Belongs to the methyltransferase superfamily. Tam family.

Its subcellular location is the cytoplasm. It carries out the reaction trans-aconitate + S-adenosyl-L-methionine = (E)-3-(methoxycarbonyl)pent-2-enedioate + S-adenosyl-L-homocysteine. Functionally, catalyzes the S-adenosylmethionine monomethyl esterification of trans-aconitate. This Rhizobium meliloti (strain 1021) (Ensifer meliloti) protein is Trans-aconitate 2-methyltransferase.